A 427-amino-acid polypeptide reads, in one-letter code: Glutamate-1-semialdehyde 2,1-aminomutase (427 aa).

Lysine 265 is subject to N6-(pyridoxal phosphate)lysine.

Belongs to the class-III pyridoxal-phosphate-dependent aminotransferase family. HemL subfamily. In terms of assembly, homodimer. Requires pyridoxal 5'-phosphate as cofactor.

The protein localises to the cytoplasm. The enzyme catalyses (S)-4-amino-5-oxopentanoate = 5-aminolevulinate. The protein operates within porphyrin-containing compound metabolism; protoporphyrin-IX biosynthesis; 5-aminolevulinate from L-glutamyl-tRNA(Glu): step 2/2. This Pseudomonas aeruginosa (strain LESB58) protein is Glutamate-1-semialdehyde 2,1-aminomutase.